The following is a 188-amino-acid chain: NAD(P)H-quinone oxidoreductase subunit J (188 aa).

Polar residues predominate over residues 1-12; it reads MSETPSKQTAAS. The interval 1 to 23 is disordered; sequence MSETPSKQTAASDETGAVVAPEP.

Belongs to the complex I 30 kDa subunit family. NDH-1 can be composed of about 15 different subunits; different subcomplexes with different compositions have been identified which probably have different functions.

It localises to the cellular thylakoid membrane. It catalyses the reaction a plastoquinone + NADH + (n+1) H(+)(in) = a plastoquinol + NAD(+) + n H(+)(out). The enzyme catalyses a plastoquinone + NADPH + (n+1) H(+)(in) = a plastoquinol + NADP(+) + n H(+)(out). In terms of biological role, NDH-1 shuttles electrons from an unknown electron donor, via FMN and iron-sulfur (Fe-S) centers, to quinones in the respiratory and/or the photosynthetic chain. The immediate electron acceptor for the enzyme in this species is believed to be plastoquinone. Couples the redox reaction to proton translocation, and thus conserves the redox energy in a proton gradient. Cyanobacterial NDH-1 also plays a role in inorganic carbon-concentration. In Synechococcus sp. (strain CC9605), this protein is NAD(P)H-quinone oxidoreductase subunit J.